A 252-amino-acid chain; its full sequence is Octanoyltransferase (252 aa).

The BPL/LPL catalytic domain maps to 56 to 237 (ADTGDEIWLV…RLIANLDGAS (182 aa)). Residues 96–103 (RGGQITYH), 168–170 (ALG), and 181–183 (GLS) contribute to the substrate site. C199 serves as the catalytic Acyl-thioester intermediate.

It belongs to the LipB family.

It is found in the cytoplasm. The catalysed reaction is octanoyl-[ACP] + L-lysyl-[protein] = N(6)-octanoyl-L-lysyl-[protein] + holo-[ACP] + H(+). It participates in protein modification; protein lipoylation via endogenous pathway; protein N(6)-(lipoyl)lysine from octanoyl-[acyl-carrier-protein]: step 1/2. In terms of biological role, catalyzes the transfer of endogenously produced octanoic acid from octanoyl-acyl-carrier-protein onto the lipoyl domains of lipoate-dependent enzymes. Lipoyl-ACP can also act as a substrate although octanoyl-ACP is likely to be the physiological substrate. This chain is Octanoyltransferase, found in Burkholderia lata (strain ATCC 17760 / DSM 23089 / LMG 22485 / NCIMB 9086 / R18194 / 383).